The chain runs to 154 residues: Large ribosomal subunit protein uL30 (154 aa).

The interval 122-141 (RGGHDGIKTPASDGGQLGKH) is disordered.

This sequence belongs to the universal ribosomal protein uL30 family. Part of the 50S ribosomal subunit.

This is Large ribosomal subunit protein uL30 from Halobacterium salinarum (strain ATCC 29341 / DSM 671 / R1).